The sequence spans 515 residues: MSMIAAFYSNKSILITGATGFLGKVLMEKLFRTSPHLKVIYILVRPKSGQTLQERVFQILNSKLFEKVKEVCPNVHEKIRPISADLNQRDFAISKEDVQELLSCTNIIFHCAATVRFDAHLREAVQLNVTATQQLLLMASQMPKLEAFIHISTAFSNCNLSHIDEVIYPCPVEPRKIIDSMEWLDDSIIEEITPKLIGDRPNTYTYTKALGEIVVQQESGNLNVAIVRPSIVGATWQEPFPGWVDNLNGPSGLIIATGKGFLRSIKATPMAVADVIPVDTVVNLTIAVGWYTAVHRPKSTLIYHSTSGNLNPCNWYKMGLQVLATIEKIPFESAFRRPNADFTTSNFTTHYWNTVSHRVPAIIYDFYLRLTGRKPRMLKLMNRLLKTISMLEYFINHSWEWSTNNTEMLLSELSPEDQRVFNFDVRQLNWLEYIENYVLGVKKYLLKEDLAGIPKAKQHLRRLRNIHYLFNTALFLIIWRLLIARSQMARNVWFFIVSFCYKFISYFRASSTLKV.

At 1–464 (MSMIAAFYSN…KAKQHLRRLR (464 aa)) the chain is on the cytoplasmic side. A helical membrane pass occupies residues 465 to 484 (NIHYLFNTALFLIIWRLLIA). The Peroxisomal segment spans residues 485 to 515 (RSQMARNVWFFIVSFCYKFISYFRASSTLKV).

It belongs to the fatty acyl-CoA reductase family. As to expression, specifically expressed in the meibomian glands of the eyelid and the sebaceous glands of the skin. Also expressed in the brain where large quantities of ether lipids are synthesized.

It localises to the peroxisome membrane. It carries out the reaction a long-chain fatty acyl-CoA + 2 NADPH + 2 H(+) = a long-chain primary fatty alcohol + 2 NADP(+) + CoA. The enzyme catalyses hexadecanoyl-CoA + 2 NADPH + 2 H(+) = hexadecan-1-ol + 2 NADP(+) + CoA. It catalyses the reaction octadecanoyl-CoA + 2 NADPH + 2 H(+) = octadecan-1-ol + 2 NADP(+) + CoA. The catalysed reaction is a very long-chain fatty acyl-CoA + 2 NADPH + 2 H(+) = a very long-chain primary fatty alcohol + 2 NADP(+) + CoA. It carries out the reaction an ultra-long-chain fatty acyl-CoA + 2 NADPH + 2 H(+) = an ultra long-chain primary fatty alcohol + 2 NADP(+) + CoA. The enzyme catalyses eicosanoyl-CoA + 2 NADPH + 2 H(+) = eicosan-1-ol + 2 NADP(+) + CoA. It catalyses the reaction docosanoyl-CoA + 2 NADPH + 2 H(+) = docosan-1-ol + 2 NADP(+) + CoA. The catalysed reaction is tetracosanoyl-CoA + 2 NADPH + 2 H(+) = tetracosan-1-ol + 2 NADP(+) + CoA. It carries out the reaction hexacosanoyl-CoA + 2 NADPH + 2 H(+) = hexacosan-1-ol + 2 NADP(+) + CoA. The enzyme catalyses octacosanoyl-CoA + 2 NADPH + 2 H(+) = octacosan-1-ol + 2 NADP(+) + CoA. It catalyses the reaction triacontanoyl-CoA + 2 NADPH + 2 H(+) = triacontan-1-ol + 2 NADP(+) + CoA. The catalysed reaction is 18-methylnonadecanoyl-CoA + 2 NADPH + 2 H(+) = 18-methylnonadecan-1-ol + 2 NADP(+) + CoA. It carries out the reaction 20-methylheneicosanoyl-CoA + 2 NADPH + 2 H(+) = 20-methylheneicosan-1-ol + 2 NADP(+) + CoA. The enzyme catalyses 22-methyltricosanoyl-CoA + 2 NADPH + 2 H(+) = 22-methyltricosan-1-ol + 2 NADP(+) + CoA. It catalyses the reaction 24-methylpentacosanoyl-CoA + 2 NADPH + 2 H(+) = 24-methylpentacosan-1-ol + 2 NADP(+) + CoA. Its function is as follows. Catalyzes the reduction of saturated but not unsaturated C16 or C18 fatty acyl-CoA to fatty alcohols. A lower activity can be observed with shorter fatty acyl-CoA substrates. Can produce very long-chain and ultra long-chain FAls, regardless of whether they have a straight or branched chain. It may play a role in the production of ether lipids/plasmalogens and wax monoesters which synthesis requires fatty alcohols as substrates. The polypeptide is Fatty acyl-CoA reductase 2 (Mus musculus (Mouse)).